The chain runs to 603 residues: F-box only protein 46 (603 aa).

The interval 20–54 (YSQNQPRPPSATLKPPVCPDTSSGTEPDHRPAHLE) is disordered. Residues S21 and S67 each carry the phosphoserine modification. Disordered regions lie at residues 111 to 163 (GGSR…PTSS), 235 to 301 (EAQR…TRAK), 332 to 359 (EASE…ARDC), and 396 to 442 (TVSP…GTTD). A Phosphothreonine modification is found at T347. Residues 347-356 (TPPAPPPPPA) are compositionally biased toward pro residues. The 53-residue stretch at 470 to 522 (RQYMLLLPEHVLVKIFSFLPTRALAALKCTCHHFKGIIEAFGVRATDSRWSRD) folds into the F-box domain.

Part of a SCF (SKP1-cullin-F-box) protein ligase complex SCF(FBXO46) composed of CUL1, SKP1, RBX1 and FBXO46. In terms of processing, phosphorylated by ATM in response to DNA damage, promoting ubiquitination and degradation by the SCF(FBXO31) complex. ATM-phosphorylated FBXO46 is ubiquitinated and degradaded by the SCF(FBXO31) complex in response to DNA damage.

It functions in the pathway protein modification; protein ubiquitination. Substrate-recognition component of the SCF(FBXO46) protein ligase complex, which mediates the ubiquitination and degradation of target proteins. In absence of stress, the SCF(FBXO46) complex catalyzes ubiquitination and degradation of MTOR-phosphorylated FBXO31. The polypeptide is F-box only protein 46 (Fbxo46) (Rattus norvegicus (Rat)).